A 185-amino-acid polypeptide reads, in one-letter code: Elongation factor P (185 aa).

It belongs to the elongation factor P family.

The protein resides in the cytoplasm. The protein operates within protein biosynthesis; polypeptide chain elongation. Its function is as follows. Involved in peptide bond synthesis. Stimulates efficient translation and peptide-bond synthesis on native or reconstituted 70S ribosomes in vitro. Probably functions indirectly by altering the affinity of the ribosome for aminoacyl-tRNA, thus increasing their reactivity as acceptors for peptidyl transferase. This chain is Elongation factor P, found in Pelotomaculum thermopropionicum (strain DSM 13744 / JCM 10971 / SI).